The chain runs to 133 residues: Ribosome-binding factor A (133 aa).

It belongs to the RbfA family. In terms of assembly, monomer. Binds 30S ribosomal subunits, but not 50S ribosomal subunits or 70S ribosomes.

It localises to the cytoplasm. In terms of biological role, one of several proteins that assist in the late maturation steps of the functional core of the 30S ribosomal subunit. Associates with free 30S ribosomal subunits (but not with 30S subunits that are part of 70S ribosomes or polysomes). Required for efficient processing of 16S rRNA. May interact with the 5'-terminal helix region of 16S rRNA. The chain is Ribosome-binding factor A from Enterobacter sp. (strain 638).